A 396-amino-acid chain; its full sequence is L-lactate dehydrogenase (396 aa).

The FMN hydroxy acid dehydrogenase domain maps to 1–380 (MIISAASDYR…TQDSLVQGLG (380 aa)). Substrate is bound at residue tyrosine 24. FMN-binding residues include serine 106 and glutamine 127. Residue tyrosine 129 coordinates substrate. An FMN-binding site is contributed by threonine 155. Arginine 164 contributes to the substrate binding site. Lysine 251 is a binding site for FMN. The active-site Proton acceptor is histidine 275. Arginine 278 serves as a coordination point for substrate. FMN is bound at residue 306–330 (DSGIRNGLDVVRMIALGADTVLLGR).

This sequence belongs to the FMN-dependent alpha-hydroxy acid dehydrogenase family. FMN serves as cofactor.

It localises to the cell inner membrane. The catalysed reaction is (S)-lactate + A = pyruvate + AH2. Catalyzes the conversion of L-lactate to pyruvate. Is coupled to the respiratory chain. The sequence is that of L-lactate dehydrogenase from Shigella dysenteriae serotype 1 (strain Sd197).